The chain runs to 271 residues: Phosphate import ATP-binding protein PstB 3 (271 aa).

The region spanning 20–266 is the ABC transporter domain; the sequence is LRVEGLGFYY…PQETQTRDYV (247 aa). 52-59 contributes to the ATP binding site; that stretch reads GPSGCGKS.

This sequence belongs to the ABC transporter superfamily. Phosphate importer (TC 3.A.1.7) family. In terms of assembly, the complex is composed of two ATP-binding proteins (PstB), two transmembrane proteins (PstC and PstA) and a solute-binding protein (PstS).

Its subcellular location is the cell inner membrane. The catalysed reaction is phosphate(out) + ATP + H2O = ADP + 2 phosphate(in) + H(+). Part of the ABC transporter complex PstSACB involved in phosphate import. Responsible for energy coupling to the transport system. The sequence is that of Phosphate import ATP-binding protein PstB 3 from Synechocystis sp. (strain ATCC 27184 / PCC 6803 / Kazusa).